A 499-amino-acid chain; its full sequence is Cytochrome P450 ARB_01131 (499 aa).

The N-terminal stretch at 1–21 (MLSLIVACLVLPLICYKLVRS) is a signal peptide. Asn-23 carries N-linked (GlcNAc...) asparagine glycosylation. Heme is bound at residue Cys-437.

This sequence belongs to the cytochrome P450 family. Heme is required as a cofactor.

Together with an NADPH cytochrome P450 the enzyme system catalyzes the terminal hydroxylation as the first step in the assimilation of alkanes and fatty acids. The sequence is that of Cytochrome P450 ARB_01131 from Arthroderma benhamiae (strain ATCC MYA-4681 / CBS 112371) (Trichophyton mentagrophytes).